A 1171-amino-acid polypeptide reads, in one-letter code: Pyruvate:ferredoxin oxidoreductase (1171 aa).

T29 and R112 together coordinate pyruvate. CoA-binding positions include S424–V428, K456, N556, and N598. 2 consecutive 4Fe-4S ferredoxin-type domains span residues N677–A706 and F733–L764. [4Fe-4S] cluster contacts are provided by C686, C689, C692, C696, C742, C745, C748, C752, C809, and C812. Residues E814, C837, D967–W969, and T995–N1000 each bind thiamine diphosphate. C837 contacts [4Fe-4S] cluster. Residues D967, T995, and V997 each contribute to the Mg(2+) site. N1000 contributes to the pyruvate binding site. Residue C1075 participates in [4Fe-4S] cluster binding.

It belongs to the pyruvate:ferredoxin/flavodoxin oxidoreductase family. Homodimer. [4Fe-4S] cluster serves as cofactor. The cofactor is thiamine diphosphate. It depends on Mg(2+) as a cofactor.

The enzyme catalyses 2 oxidized [2Fe-2S]-[ferredoxin] + pyruvate + CoA = 2 reduced [2Fe-2S]-[ferredoxin] + acetyl-CoA + CO2 + H(+). In terms of biological role, catalyzes the oxidative decarboxylation of pyruvate to acetyl-CoA and carbon dioxide. The two electrons that are generated as a result of pyruvate decarboxylation are used in the reduction of low potential ferredoxins, which provide reducing equivalents for central metabolism. Also catalyzes the reverse reaction, i.e. the synthesis of pyruvate from acetyl-CoA and carbon dioxide. Appears to function physiologically in both directions. The oxidation of pyruvate by PFOR is required to connect glycolysis and the Wood-Ljungdahl pathway of reductive acetogenesis. The conversion of acetyl-CoA to pyruvate links the Wood-Ljungdahl pathway of autotrophic CO2 fixation to the reductive tricarboxylic acid cycle. Can use methyl viologen as electron carrier in vitro. This Moorella thermoacetica (strain ATCC 39073 / JCM 9320) protein is Pyruvate:ferredoxin oxidoreductase.